The sequence spans 115 residues: ESX-1 secretion-associated protein EspL (115 aa).

In Mycobacterium tuberculosis (strain CDC 1551 / Oshkosh), this protein is ESX-1 secretion-associated protein EspL.